Here is a 378-residue protein sequence, read N- to C-terminus: Succinyl-diaminopimelate desuccinylase (378 aa).

H66 serves as a coordination point for Zn(2+). The active site involves D68. D99 provides a ligand contact to Zn(2+). E133 serves as the catalytic Proton acceptor. The Zn(2+) site is built by E134, E162, and H348.

The protein belongs to the peptidase M20A family. DapE subfamily. As to quaternary structure, homodimer. The cofactor is Zn(2+). Co(2+) is required as a cofactor.

It catalyses the reaction N-succinyl-(2S,6S)-2,6-diaminopimelate + H2O = (2S,6S)-2,6-diaminopimelate + succinate. The protein operates within amino-acid biosynthesis; L-lysine biosynthesis via DAP pathway; LL-2,6-diaminopimelate from (S)-tetrahydrodipicolinate (succinylase route): step 3/3. In terms of biological role, catalyzes the hydrolysis of N-succinyl-L,L-diaminopimelic acid (SDAP), forming succinate and LL-2,6-diaminopimelate (DAP), an intermediate involved in the bacterial biosynthesis of lysine and meso-diaminopimelic acid, an essential component of bacterial cell walls. The protein is Succinyl-diaminopimelate desuccinylase of Halorhodospira halophila (strain DSM 244 / SL1) (Ectothiorhodospira halophila (strain DSM 244 / SL1)).